Consider the following 643-residue polypeptide: Pescadillo homolog (643 aa).

One can recognise a BRCT domain in the interval 319 to 412 (KLKTLFKGLK…RLLPTNKYFM (94 aa)). Disordered stretches follow at residues 437 to 475 (AARKAAEGEEEEETFEPAEVNADHEHISDDEEVQDPENE), 492 to 571 (TDSL…YREN), and 609 to 643 (DKNARLLANKRERIEKQKRAEQMEKQKQQRKQILA). Positions 464 to 475 (SDDEEVQDPENE) are enriched in acidic residues. The segment covering 492-518 (TDSLNSGKKEGADDATDNGKDAAEKKQ) has biased composition (basic and acidic residues). Positions 524 to 544 (GESDDEDEEEEDDDDGEEEED) are enriched in acidic residues. The stretch at 569-643 (RENEAEKKIV…QKQQRKQILA (75 aa)) forms a coiled coil. A compositionally biased stretch (basic and acidic residues) spans 609–635 (DKNARLLANKRERIEKQKRAEQMEKQK).

Belongs to the pescadillo family.

It localises to the nucleus. It is found in the nucleolus. The protein localises to the nucleoplasm. Functionally, required for maturation of ribosomal RNAs and formation of the large ribosomal subunit. In Anopheles gambiae (African malaria mosquito), this protein is Pescadillo homolog.